Here is a 169-residue protein sequence, read N- to C-terminus: Der GTPase-activating protein YihI (169 aa).

Disordered stretches follow at residues 1-100 (MKPS…AELE) and 144-169 (GLSYDDDEEEEEDEKQEDMMRLLRGN). Basic residues predominate over residues 10–19 (SKGHAKARRK). Positions 20 to 30 (TREELDQEARD) are enriched in basic and acidic residues. Residues 31–40 (RKRQKKRRGH) show a composition bias toward basic residues. Residues 49 to 58 (GNTTSGSKGQ) are compositionally biased toward polar residues. Residues 147–159 (YDDDEEEEEDEKQ) are compositionally biased toward acidic residues. Over residues 160 to 169 (EDMMRLLRGN) the composition is skewed to basic and acidic residues.

It belongs to the YihI family. Interacts with Der.

A GTPase-activating protein (GAP) that modifies Der/EngA GTPase function. May play a role in ribosome biogenesis. In Escherichia coli O6:H1 (strain CFT073 / ATCC 700928 / UPEC), this protein is Der GTPase-activating protein YihI.